We begin with the raw amino-acid sequence, 881 residues long: Probable alpha/beta-glucosidase agdC (881 aa).

Positions 1 to 14 (MLRSLLLLAPLVGA) are cleaved as a signal peptide. 3 N-linked (GlcNAc...) asparagine glycosylation sites follow: asparagine 171, asparagine 293, and asparagine 373. Aspartate 422 (nucleophile) is an active-site residue. Residue glutamate 425 is part of the active site. Residues 440-485 (YARDNDLPPAAPPVRPSNPRPLPGFPGDFQPSSSSKRSTKGSKVGL) form a disordered region. The span at 448 to 463 (PAAPPVRPSNPRPLPG) shows a compositional bias: pro residues. An N-linked (GlcNAc...) asparagine glycan is attached at asparagine 506. The Proton donor role is filled by aspartate 571. N-linked (GlcNAc...) asparagine glycosylation is found at asparagine 572, asparagine 608, and asparagine 742.

Belongs to the glycosyl hydrolase 31 family.

It is found in the secreted. It catalyses the reaction Hydrolysis of terminal, non-reducing (1-&gt;4)-linked alpha-D-glucose residues with release of alpha-D-glucose.. The catalysed reaction is Hydrolysis of terminal, non-reducing beta-D-glucosyl residues with release of beta-D-glucose.. Its function is as follows. Glucosidase involved in the degradation of cellulosic biomass. Has both alpha- and beta-glucosidase activity. This is Probable alpha/beta-glucosidase agdC (agdC) from Aspergillus fumigatus (strain CBS 144.89 / FGSC A1163 / CEA10) (Neosartorya fumigata).